Reading from the N-terminus, the 125-residue chain is Glycine cleavage system H protein (125 aa).

The Lipoyl-binding domain occupies 22–104; it reads SYVIGITDFA…YDTGWILKLE (83 aa). Lys-63 is modified (N6-lipoyllysine).

Belongs to the GcvH family. The glycine cleavage system is composed of four proteins: P, T, L and H. It depends on (R)-lipoate as a cofactor.

The glycine cleavage system catalyzes the degradation of glycine. The H protein shuttles the methylamine group of glycine from the P protein to the T protein. Its function is as follows. Is also involved in protein lipoylation via its role as an octanoyl/lipoyl carrier protein intermediate. This Listeria monocytogenes serotype 4a (strain HCC23) protein is Glycine cleavage system H protein.